The chain runs to 141 residues: Protein NrdI (141 aa).

This sequence belongs to the NrdI family.

In terms of biological role, probably involved in ribonucleotide reductase function. This chain is Protein NrdI, found in Bifidobacterium animalis subsp. lactis (strain AD011).